The following is a 213-amino-acid chain: MTLTMAMPKGRIFEEAVQLLRSAGYNLPSSFEQSRKLIIDVPNESLRFILAKPMDVPTYVEHGVADVGVAGKDVMLEEKRDVHEVLDLNISACHLAVAALPTYQRGELNPKVASKYPNVASQFFKEQGEQVEIIKLNGSIELAPIMGLAGRIVDIVSTGQTLKENGLVELEQIRKITSRFIVNPASYRMRAGEIHDMVERLATVIEGDGSEDH.

Belongs to the ATP phosphoribosyltransferase family. Short subfamily. Heteromultimer composed of HisG and HisZ subunits.

It is found in the cytoplasm. The enzyme catalyses 1-(5-phospho-beta-D-ribosyl)-ATP + diphosphate = 5-phospho-alpha-D-ribose 1-diphosphate + ATP. Its pathway is amino-acid biosynthesis; L-histidine biosynthesis; L-histidine from 5-phospho-alpha-D-ribose 1-diphosphate: step 1/9. Its function is as follows. Catalyzes the condensation of ATP and 5-phosphoribose 1-diphosphate to form N'-(5'-phosphoribosyl)-ATP (PR-ATP). Has a crucial role in the pathway because the rate of histidine biosynthesis seems to be controlled primarily by regulation of HisG enzymatic activity. This is ATP phosphoribosyltransferase from Shouchella clausii (strain KSM-K16) (Alkalihalobacillus clausii).